Here is a 318-residue protein sequence, read N- to C-terminus: 4-hydroxy-3-methylbut-2-enyl diphosphate reductase (318 aa).

[4Fe-4S] cluster is bound at residue Cys12. Positions 41 and 74 each coordinate (2E)-4-hydroxy-3-methylbut-2-enyl diphosphate. Dimethylallyl diphosphate-binding residues include His41 and His74. Residues His41 and His74 each contribute to the isopentenyl diphosphate site. Cys96 provides a ligand contact to [4Fe-4S] cluster. Residue His124 coordinates (2E)-4-hydroxy-3-methylbut-2-enyl diphosphate. His124 serves as a coordination point for dimethylallyl diphosphate. His124 is a binding site for isopentenyl diphosphate. The active-site Proton donor is the Glu126. A (2E)-4-hydroxy-3-methylbut-2-enyl diphosphate-binding site is contributed by Thr167. [4Fe-4S] cluster is bound at residue Cys197. (2E)-4-hydroxy-3-methylbut-2-enyl diphosphate contacts are provided by Ser225, Ser226, Asn227, and Ser269. The dimethylallyl diphosphate site is built by Ser225, Ser226, Asn227, and Ser269. 4 residues coordinate isopentenyl diphosphate: Ser225, Ser226, Asn227, and Ser269.

Belongs to the IspH family. Requires [4Fe-4S] cluster as cofactor.

It catalyses the reaction isopentenyl diphosphate + 2 oxidized [2Fe-2S]-[ferredoxin] + H2O = (2E)-4-hydroxy-3-methylbut-2-enyl diphosphate + 2 reduced [2Fe-2S]-[ferredoxin] + 2 H(+). The enzyme catalyses dimethylallyl diphosphate + 2 oxidized [2Fe-2S]-[ferredoxin] + H2O = (2E)-4-hydroxy-3-methylbut-2-enyl diphosphate + 2 reduced [2Fe-2S]-[ferredoxin] + 2 H(+). The protein operates within isoprenoid biosynthesis; dimethylallyl diphosphate biosynthesis; dimethylallyl diphosphate from (2E)-4-hydroxy-3-methylbutenyl diphosphate: step 1/1. Its pathway is isoprenoid biosynthesis; isopentenyl diphosphate biosynthesis via DXP pathway; isopentenyl diphosphate from 1-deoxy-D-xylulose 5-phosphate: step 6/6. Functionally, catalyzes the conversion of 1-hydroxy-2-methyl-2-(E)-butenyl 4-diphosphate (HMBPP) into a mixture of isopentenyl diphosphate (IPP) and dimethylallyl diphosphate (DMAPP). Acts in the terminal step of the DOXP/MEP pathway for isoprenoid precursor biosynthesis. The protein is 4-hydroxy-3-methylbut-2-enyl diphosphate reductase of Francisella philomiragia subsp. philomiragia (strain ATCC 25017 / CCUG 19701 / FSC 153 / O#319-036).